The following is a 725-amino-acid chain: Eukaryotic elongation factor 2 kinase (725 aa).

A compositionally biased stretch (basic and acidic residues) spans 1-12; sequence MADEDLIFRLEG. The interval 1–38 is disordered; the sequence is MADEDLIFRLEGVDGGQSPRAGHDGDSDGDSDDEEGYF. A2 carries the N-acetylalanine modification. Residues S18 and S27 each carry the phosphoserine modification. Residues 27–36 are compositionally biased toward acidic residues; sequence SDGDSDDEEG. 2 positions are modified to phosphoserine; by autocatalysis: S61 and S66. S70, S71, S72, and S74 each carry phosphoserine. A Phosphoserine; by autocatalysis and TRPM7 modification is found at S78. A calmodulin-binding region spans residues 81 to 94; that stretch reads FKEAWKHAIQKAKH. The Alpha-type protein kinase domain maps to 116 to 326; it reads RYNAVTGEWL…ICESMGLAPF (211 aa). A Phosphoserine modification is found at S243. 296-302 serves as a coordination point for ATP; that stretch reads GDGNLGV. T348 and T353 each carry phosphothreonine; by autocatalysis. Disordered regions lie at residues 352–405 and 423–477; these read GTEE…PHSQ and SRDH…SLGS. S359 carries the phosphoserine; by MAPK13 and CDK1 modification. Positions 363–377 are enriched in low complexity; it reads RTLSGSRPPLLRPLS. S366 bears the Phosphoserine; by autocatalysis, RPS6KA1 and RPS6KB1 mark. The segment covering 386-404 has biased composition (polar residues); it reads SDVTFDSLPSSPSSATPHS. Position 392 is a phosphoserine (S392). A Phosphoserine; by AMPK modification is found at S398. 2 stretches are compositionally biased toward basic and acidic residues: residues 423-436 and 445-469; these read SRDHDHLDNHRESE and SEKRGELDDPEPREHGHSYSNRKYE. S435 carries the post-translational modification Phosphoserine. At S445 the chain carries Phosphoserine; by autocatalysis. Position 470 is a phosphoserine (S470). The residue at position 474 (S474) is a Phosphoserine; by autocatalysis. A Phosphoserine modification is found at S477. S491 is modified (phosphoserine; by autocatalysis). At S500 the chain carries Phosphoserine; by PKA.

It belongs to the protein kinase superfamily. Alpha-type protein kinase family. As to quaternary structure, monomer or homodimer. Interacts with Calmodulin/CALM1; this interaction is strictly required for phosphorylation activity. Post-translationally, autophosphorylated at multiple residues, Thr-348 being the major site. Phosphorylated by AMP-activated protein kinase AMPK at Ser-398 leading to EEF2K activation and protein synthesis inhibition. Phosphorylated by TRPM7 at Ser-78 resulting in improved protein stability, higher EE2F phosphorylated and subsequently reduced rate of protein synthesis. Phosphorylation by other kinases such as CDK1 and MAPK13 at Ser-359 or RPS6KA1 and RPS6KB1 at Ser-366 instead decrease EEF2K activity and promote protein synthesis.

It carries out the reaction [translation elongation factor 2] + ATP = [translation elongation factor 2]-phosphate + ADP + H(+). Undergoes calcium/calmodulin-dependent intramolecular autophosphorylation, and this results in it becoming partially calcium/calmodulin-independent. Functionally, threonine kinase that regulates protein synthesis by controlling the rate of peptide chain elongation. Upon activation by a variety of upstream kinases including AMPK or TRPM7, phosphorylates the elongation factor EEF2 at a single site, renders it unable to bind ribosomes and thus inactive. In turn, the rate of protein synthesis is reduced. This is Eukaryotic elongation factor 2 kinase (EEF2K) from Homo sapiens (Human).